Reading from the N-terminus, the 361-residue chain is Putative dual-specificity RNA methyltransferase RlmN (361 aa).

Glu91 acts as the Proton acceptor in catalysis. Residues 97 to 329 (QHYGLSVCVT…KKKGVNCVVR (233 aa)) form the Radical SAM core domain. 3 residues coordinate [4Fe-4S] cluster: Cys111, Cys115, and Cys118. Residues 163-164 (GE), Ser195, 218-220 (SLH), and Thr296 contribute to the S-adenosyl-L-methionine site.

This sequence belongs to the radical SAM superfamily. RlmN family. The cofactor is [4Fe-4S] cluster.

The protein localises to the cytoplasm. It carries out the reaction adenosine(2503) in 23S rRNA + 2 reduced [2Fe-2S]-[ferredoxin] + 2 S-adenosyl-L-methionine = 2-methyladenosine(2503) in 23S rRNA + 5'-deoxyadenosine + L-methionine + 2 oxidized [2Fe-2S]-[ferredoxin] + S-adenosyl-L-homocysteine. The enzyme catalyses adenosine(37) in tRNA + 2 reduced [2Fe-2S]-[ferredoxin] + 2 S-adenosyl-L-methionine = 2-methyladenosine(37) in tRNA + 5'-deoxyadenosine + L-methionine + 2 oxidized [2Fe-2S]-[ferredoxin] + S-adenosyl-L-homocysteine. Functionally, specifically methylates position 2 of adenine 2503 in 23S rRNA and position 2 of adenine 37 in tRNAs. The polypeptide is Putative dual-specificity RNA methyltransferase RlmN (Streptococcus pneumoniae (strain CGSP14)).